Reading from the N-terminus, the 229-residue chain is 7-cyano-7-deazaguanine synthase (229 aa).

7–17 lines the ATP pocket; it reads LSGGLDSSTIL. Positions 191, 199, 202, and 205 each coordinate Zn(2+).

This sequence belongs to the QueC family. Zn(2+) is required as a cofactor.

The enzyme catalyses 7-carboxy-7-deazaguanine + NH4(+) + ATP = 7-cyano-7-deazaguanine + ADP + phosphate + H2O + H(+). Its pathway is purine metabolism; 7-cyano-7-deazaguanine biosynthesis. Catalyzes the ATP-dependent conversion of 7-carboxy-7-deazaguanine (CDG) to 7-cyano-7-deazaguanine (preQ(0)). The chain is 7-cyano-7-deazaguanine synthase from Nostoc sp. (strain PCC 7120 / SAG 25.82 / UTEX 2576).